A 268-amino-acid polypeptide reads, in one-letter code: tRNA pseudouridine synthase A (268 aa).

The Nucleophile role is filled by D52. Substrate is bound at residue Y113.

It belongs to the tRNA pseudouridine synthase TruA family. Homodimer.

It carries out the reaction uridine(38/39/40) in tRNA = pseudouridine(38/39/40) in tRNA. In terms of biological role, formation of pseudouridine at positions 38, 39 and 40 in the anticodon stem and loop of transfer RNAs. The sequence is that of tRNA pseudouridine synthase A from Chlamydia felis (strain Fe/C-56) (Chlamydophila felis).